Reading from the N-terminus, the 315-residue chain is MPTNQLEQLKQFTTVVADSSDFDSMKSYQPRDATTNPSLILKAAGMPDYGHLVEKAITDAGSGASPAAVIDLLLVLFGAEILKIVPGRVSTEVDARLSFDRVGSMEKARTLIALYEKQGVPRERILIKLASTWEGIRAAEKLQQEGINCNMTLLFSFPQAVAAAKAKVKLISPFVGRILDWYKKSTGQDYAPADDPGVNSVREIYTYYKRFGYETEVMGASFRNKDEILELAGCDLLTIAPKLLGELAASTDPVERKLEPEAARKAKVKRVSFDEKSFRWALNEDQMATEKLSDGIRSFAADVRKLEQLIQQQRG.

Lys128 serves as the catalytic Schiff-base intermediate with substrate.

Belongs to the transaldolase family. Type 1 subfamily. In terms of assembly, homodimer.

The protein resides in the cytoplasm. The enzyme catalyses D-sedoheptulose 7-phosphate + D-glyceraldehyde 3-phosphate = D-erythrose 4-phosphate + beta-D-fructose 6-phosphate. The protein operates within carbohydrate degradation; pentose phosphate pathway; D-glyceraldehyde 3-phosphate and beta-D-fructose 6-phosphate from D-ribose 5-phosphate and D-xylulose 5-phosphate (non-oxidative stage): step 2/3. Functionally, transaldolase is important for the balance of metabolites in the pentose-phosphate pathway. The sequence is that of Transaldolase from Opitutus terrae (strain DSM 11246 / JCM 15787 / PB90-1).